A 551-amino-acid polypeptide reads, in one-letter code: Endolytic murein transglycosylase (551 aa).

Residues 1-187 lie on the Cytoplasmic side of the membrane; sequence MSEKSREEEK…PKKEKKSHVK (187 aa). Residues 38-180 form a disordered region; that stretch reads VRTPANEPSA…EGAKPAKPKK (143 aa). 2 stretches are compositionally biased toward low complexity: residues 100–110 and 145–157; these read PSSPAEESGSR and QAGPETPTPATET. Residues 159–174 are compositionally biased toward basic and acidic residues; it reads DIIRDTSRRSRREGAK. A helical transmembrane segment spans residues 188–208; that stretch reads AFVISFLVFLALLSAGGYFGY. At 209–551 the chain is on the extracellular side; that stretch reads QYVLDSLLPI…VAEHVNSKLN (343 aa).

The protein belongs to the transglycosylase MltG family. As to quaternary structure, interacts with RodZ. Interacts with MreC in the elongasome; interaction is strongly reduced when the 90 C-terminal residues of MreC are missing. Interacts with KhpB (also called EloR/Jag) via MltG's N-terminus, suggesting the N-terminus of MltG is cytoplasmic.

It is found in the cell membrane. It carries out the reaction a peptidoglycan chain = a peptidoglycan chain with N-acetyl-1,6-anhydromuramyl-[peptide] at the reducing end + a peptidoglycan chain with N-acetylglucosamine at the non-reducing end.. In terms of biological role, functions as a peptidoglycan terminase that cleaves nascent peptidoglycan strands endolytically to terminate their elongation. Its function is as follows. Mutations in this gene suppress deletion of PBP2b (penA); truncation at residue 168, undefined changes between residue Ile-447 and Ala-505, and mutation of Ala-505 suppress the penA deletion. Probably part of the elongasome which synthesizes peripheral peptidoglycan. This chain is Endolytic murein transglycosylase, found in Streptococcus pneumoniae (strain ATCC BAA-255 / R6).